The sequence spans 292 residues: Retinal homeobox protein Rx3 (292 aa).

The interval 1–27 is disordered; that stretch reads MRLVGSQYKDMEDRLSPSARLVRSPGS. Positions 32–39 match the Octapeptide motif motif; it reads HSIESILG. Disordered regions lie at residues 53 to 72 and 85 to 107; these read GSGKTGKDTEHLSPKKDSNK and SPDLPDADGGKLSDDENPKKKHR. Basic and acidic residues-rich tracts occupy residues 57-72 and 92-102; these read TGKDTEHLSPKKDSNK and DGGKLSDDENP. A DNA-binding region (homeobox) is located at residues 106–165; the sequence is HRRNRTTFTTFQLHELERAFEKSHYPDVYSREELALKVNLPEVRVQVWFQNRRAKWRRQE. The short motif at 272-285 is the OAR element; that stretch reads TSIASLRMKAKEHI. Residues 278-282 carry the Nuclear localization signal motif; the sequence is RMKAK.

Belongs to the paired homeobox family. Bicoid subfamily.

Its subcellular location is the nucleus. Plays a critical role in eye formation by regulating the initial specification of retinal cells and/or their subsequent proliferation. The protein is Retinal homeobox protein Rx3 (rx3) of Danio rerio (Zebrafish).